The chain runs to 115 residues: Large ribosomal subunit protein bL19 (115 aa).

This sequence belongs to the bacterial ribosomal protein bL19 family.

This protein is located at the 30S-50S ribosomal subunit interface and may play a role in the structure and function of the aminoacyl-tRNA binding site. This Finegoldia magna (strain ATCC 29328 / DSM 20472 / WAL 2508) (Peptostreptococcus magnus) protein is Large ribosomal subunit protein bL19.